Here is a 251-residue protein sequence, read N- to C-terminus: NAD kinase (251 aa).

Asp-51 (proton acceptor) is an active-site residue. Residues 51 to 52, Lys-56, 113 to 114, Lys-124, His-140, Asp-142, 153 to 158, and Ala-177 contribute to the NAD(+) site; these read DG, NE, and TGYSLS.

Belongs to the NAD kinase family. The cofactor is a divalent metal cation.

The protein localises to the cytoplasm. It carries out the reaction NAD(+) + ATP = ADP + NADP(+) + H(+). Its function is as follows. Involved in the regulation of the intracellular balance of NAD and NADP, and is a key enzyme in the biosynthesis of NADP. Catalyzes specifically the phosphorylation on 2'-hydroxyl of the adenosine moiety of NAD to yield NADP. This chain is NAD kinase, found in Thermosipho melanesiensis (strain DSM 12029 / CIP 104789 / BI429).